The chain runs to 333 residues: MSYHLEKLNIKFIINQALIEIKNCKNIKELELIRIYWIGKNGFFSKKNKLLNILFPYEDFIKKDMLKKAYKKIKYIYFKKKQKIKNKEIKIKIFKEKIDISLPGRDVCNGSFHPISNIIRYSEKFFCSLGFSIVHGHEVENIYYNFDALNIPENHPSRTEHDTFWINENCLLRTQTSGIQIKVMESKKPPLKIISSGKVYRNDHDKTHTPMFHQLEGLMIDECIGISIVKSILYDFCYSLLGKKIKIRFRPSYFPFTEPSAEIDIMNEDGKWIEILGCGIVHPKILHNLKIDRNKYSGMAFGIGIERLAMLYYKLSDVRPLFINNLRFLKQFK.

Glu-258 provides a ligand contact to Mg(2+).

This sequence belongs to the class-II aminoacyl-tRNA synthetase family. Phe-tRNA synthetase alpha subunit type 1 subfamily. As to quaternary structure, tetramer of two alpha and two beta subunits. It depends on Mg(2+) as a cofactor.

The protein localises to the cytoplasm. The catalysed reaction is tRNA(Phe) + L-phenylalanine + ATP = L-phenylalanyl-tRNA(Phe) + AMP + diphosphate + H(+). The sequence is that of Phenylalanine--tRNA ligase alpha subunit from Wigglesworthia glossinidia brevipalpis.